Consider the following 401-residue polypeptide: Elongation factor Tu (401 aa).

In terms of domain architecture, tr-type G spans Lys10–Thr211. The tract at residues Gly19–Thr26 is G1. A GTP-binding site is contributed by Gly19 to Thr26. Position 26 (Thr26) interacts with Mg(2+). The tract at residues Gly62–Ala66 is G2. Positions Asp83–Gly86 are G3. GTP contacts are provided by residues Asp83–His87 and Asn138–Asp141. The interval Asn138–Asp141 is G4. Residues Ser179–Leu181 form a G5 region.

Belongs to the TRAFAC class translation factor GTPase superfamily. Classic translation factor GTPase family. EF-Tu/EF-1A subfamily. As to quaternary structure, monomer.

The protein resides in the cytoplasm. The catalysed reaction is GTP + H2O = GDP + phosphate + H(+). Functionally, GTP hydrolase that promotes the GTP-dependent binding of aminoacyl-tRNA to the A-site of ribosomes during protein biosynthesis. The protein is Elongation factor Tu of Leptospira biflexa serovar Patoc (strain Patoc 1 / Ames).